A 107-amino-acid polypeptide reads, in one-letter code: Thioredoxin 1 (107 aa).

Positions 2–107 constitute a Thioredoxin domain; that stretch reads SAAAQVTDST…TLSQTLEKHL (106 aa). Cys-32 and Cys-35 are joined by a disulfide.

This sequence belongs to the thioredoxin family.

Its function is as follows. Participates in various redox reactions through the reversible oxidation of its active center dithiol to a disulfide and catalyzes dithiol-disulfide exchange reactions. This is Thioredoxin 1 (trxA) from Nostoc sp. (strain PCC 7120 / SAG 25.82 / UTEX 2576).